Reading from the N-terminus, the 292-residue chain is ATP synthase subunit a (292 aa).

7 consecutive transmembrane segments (helical) span residues 39 to 59, 73 to 93, 102 to 122, 128 to 148, 172 to 192, 196 to 216, and 231 to 251; these read QILGIFIVFVLLLTFFIFYKL, FLLLFQMLFVWVQDTTADLLG, YFLMLLLYIVSSNLVSLLGGI, SLTFTFSLGLATFIGIVVMGI, TFIPNPFSILSGFAPLFSISL, GNILAGTVILALFYNFWIFIF, and VFAGLITPVLHIYFDVIAGVL.

It belongs to the ATPase A chain family. As to quaternary structure, F-type ATPases have 2 components, CF(1) - the catalytic core - and CF(0) - the membrane proton channel. CF(1) has five subunits: alpha(3), beta(3), gamma(1), delta(1), epsilon(1). CF(0) has three main subunits: a(1), b(2) and c(9-12). The alpha and beta chains form an alternating ring which encloses part of the gamma chain. CF(1) is attached to CF(0) by a central stalk formed by the gamma and epsilon chains, while a peripheral stalk is formed by the delta and b chains.

It is found in the cell membrane. Key component of the proton channel; it plays a direct role in the translocation of protons across the membrane. This chain is ATP synthase subunit a, found in Mycoplasma genitalium (strain ATCC 33530 / DSM 19775 / NCTC 10195 / G37) (Mycoplasmoides genitalium).